Here is a 444-residue protein sequence, read N- to C-terminus: NADH-quinone oxidoreductase subunit F (444 aa).

Residue G61–G70 participates in NAD(+) binding. G176–T223 lines the FMN pocket. Positions 353, 356, 359, and 400 each coordinate [4Fe-4S] cluster.

The protein belongs to the complex I 51 kDa subunit family. In terms of assembly, composed of 13 different subunits. Subunits NuoCD, E, F, and G constitute the peripheral sector of the complex. FMN serves as cofactor. It depends on [4Fe-4S] cluster as a cofactor.

It catalyses the reaction a quinone + NADH + 5 H(+)(in) = a quinol + NAD(+) + 4 H(+)(out). In terms of biological role, NDH-1 shuttles electrons from NADH, via FMN and iron-sulfur (Fe-S) centers, to quinones in the respiratory chain. Couples the redox reaction to proton translocation (for every two electrons transferred, four hydrogen ions are translocated across the cytoplasmic membrane), and thus conserves the redox energy in a proton gradient. The chain is NADH-quinone oxidoreductase subunit F (nuoF) from Buchnera aphidicola subsp. Acyrthosiphon pisum (strain APS) (Acyrthosiphon pisum symbiotic bacterium).